The primary structure comprises 476 residues: Ribosomal RNA small subunit methyltransferase F (476 aa).

Residues 124-130 (ASAPGSK), Glu148, Asp175, and Asp193 each bind S-adenosyl-L-methionine. Cys246 functions as the Nucleophile in the catalytic mechanism.

It belongs to the class I-like SAM-binding methyltransferase superfamily. RsmB/NOP family.

The protein resides in the cytoplasm. It carries out the reaction cytidine(1407) in 16S rRNA + S-adenosyl-L-methionine = 5-methylcytidine(1407) in 16S rRNA + S-adenosyl-L-homocysteine + H(+). Specifically methylates the cytosine at position 1407 (m5C1407) of 16S rRNA. In Photobacterium profundum (strain SS9), this protein is Ribosomal RNA small subunit methyltransferase F.